Here is a 450-residue protein sequence, read N- to C-terminus: Serine/threonine-protein kinase SSN3 (450 aa).

Positions 40–393 (YRIIGFISSG…AAQALQSPFF (354 aa)) constitute a Protein kinase domain. ATP contacts are provided by residues 46 to 54 (ISSGTYGRV) and lysine 71. Aspartate 173 acts as the Proton acceptor in catalysis. 2 disordered regions span residues 307-341 (ASSH…NLEK) and 418-450 (QDDN…RQKE). Residues 310–326 (HHNHHSHHHPHHHHGHY) are compositionally biased toward basic residues.

It belongs to the protein kinase superfamily. CMGC Ser/Thr protein kinase family. CDC2/CDKX subfamily. Component of the SRB8-11 complex, a regulatory module of the Mediator complex. Interacts with SSN8/FCC1. Mg(2+) serves as cofactor.

Its subcellular location is the nucleus. The catalysed reaction is L-seryl-[protein] + ATP = O-phospho-L-seryl-[protein] + ADP + H(+). The enzyme catalyses L-threonyl-[protein] + ATP = O-phospho-L-threonyl-[protein] + ADP + H(+). It carries out the reaction [DNA-directed RNA polymerase] + ATP = phospho-[DNA-directed RNA polymerase] + ADP + H(+). Functionally, component of the SRB8-11 complex. The SRB8-11 complex is a regulatory module of the Mediator complex which is itself involved in regulation of basal and activated RNA polymerase II-dependent transcription. The SRB8-11 complex may be involved in the transcriptional repression of a subset of genes regulated by Mediator. It may inhibit the association of the Mediator complex with RNA polymerase II to form the holoenzyme complex. The SRB8-11 complex phosphorylates the C-terminal domain (CTD) of the largest subunit of RNA polymerase II. Required for normal growth and secondary metabolism. This is Serine/threonine-protein kinase SSN3 (SSN3) from Gibberella moniliformis (Maize ear and stalk rot fungus).